Here is a 735-residue protein sequence, read N- to C-terminus: Wall-associated receptor kinase 1 (735 aa).

Residues 1-24 (MKVQEGLFLVAIFFSLACTQLVKG) form the signal peptide. Residues 25–331 (QHQPGENCQN…TTTMSCKRKE (307 aa)) lie on the Extracellular side of the membrane. Residues Asn38, Asn56, Asn80, Asn90, Asn113, Asn140, Asn209, Asn235, and Asn250 are each glycosylated (N-linked (GlcNAc...) asparagine). Residues 67-254 (RPHVLSDIEV…SICGGNSTCL (188 aa)) are polygalacturonic acid-binding. The 48-residue stretch at 234–281 (GNQTCEQVGSTSICGGNSTCLDSTPRNGYICRCNEGFDGNPYLSAGCQ) folds into the EGF-like 1 domain. 6 disulfide bridges follow: Cys238–Cys253, Cys247–Cys264, Cys266–Cys280, Cys286–Cys303, Cys297–Cys312, and Cys314–Cys327. Residues 282–328 (DVNECTTSSTIHRHNCSDPKTCRNKVGGFYCKCQSGYRLDTTTMSCK) enclose the EGF-like 2; calcium-binding domain. Residue Asn296 is glycosylated (N-linked (GlcNAc...) asparagine). A helical transmembrane segment spans residues 332–352 (FAWTTILLVTTIGFLVILLGV). Residues 353 to 735 (ACIQQRMKHL…VAILDIETGR (383 aa)) lie on the Cytoplasmic side of the membrane. Thr398 is modified (phosphothreonine). The region spanning 409-692 (YAESRILGQG…RVEKTKHKWS (284 aa)) is the Protein kinase domain. ATP contacts are provided by residues 415 to 423 (LGQGGQGTV) and Lys437. Tyr482 is subject to Phosphotyrosine. Asp534 (proton acceptor) is an active-site residue. Residues Thr568 and Thr573 each carry the phosphothreonine modification. Position 581 is a phosphotyrosine (Tyr581).

The protein belongs to the protein kinase superfamily. Ser/Thr protein kinase family. Interacts with the glycine-rich proteins GRP3 and GRP3S, and the type 2C protein phosphatase KAPP. Component of a 500 kDa complex, composed of WAK1, GRP3 and KAPP. Interacts with the oxygen-evolving enhancer protein 2 (OEE2). In terms of tissue distribution, predominantly expressed in green tissues such as stems and leaves. Detected at organ junctions.

The protein resides in the membrane. It catalyses the reaction L-seryl-[protein] + ATP = O-phospho-L-seryl-[protein] + ADP + H(+). The catalysed reaction is L-threonyl-[protein] + ATP = O-phospho-L-threonyl-[protein] + ADP + H(+). In terms of biological role, serine/threonine-protein kinase that may function as a signaling receptor of extracellular matrix component. Binding to pectin may have significance in the control of cell expansion, morphogenesis and development. Required during plant's response to pathogen infection and in plant defense against heavy metal toxicity. Phosphorylates the oxygen-evolving enhancer protein 2 (OEE2) in an GRP-3-dependent manner. In Arabidopsis thaliana (Mouse-ear cress), this protein is Wall-associated receptor kinase 1 (WAK1).